A 346-amino-acid chain; its full sequence is LRP2-binding protein (346 aa).

A TPR repeat occupies 58-91 (AMAYFLRGQLYFEEGWYEEALAQFEEIQEKDHQA). 6 Sel1-like repeats span residues 92–124 (IYQL…DSSC), 132–167 (FAAA…DNGN), 172–205 (VKAQ…GNGN), 206–241 (LESQ…ERGN), 242–276 (VYAQ…EVHD), and 296–331 (AMAS…RLNP).

Interacts with LRP2.

It localises to the cytoplasm. In terms of biological role, may act as an adapter that regulates LRP2 function. The sequence is that of LRP2-binding protein (Lrp2bp) from Rattus norvegicus (Rat).